The primary structure comprises 279 residues: Acyl-[acyl-carrier-protein]--UDP-N-acetylglucosamine O-acyltransferase (279 aa).

It belongs to the transferase hexapeptide repeat family. LpxA subfamily. In terms of assembly, homotrimer.

The protein resides in the cytoplasm. It catalyses the reaction a (3R)-hydroxyacyl-[ACP] + UDP-N-acetyl-alpha-D-glucosamine = a UDP-3-O-[(3R)-3-hydroxyacyl]-N-acetyl-alpha-D-glucosamine + holo-[ACP]. The protein operates within glycolipid biosynthesis; lipid IV(A) biosynthesis; lipid IV(A) from (3R)-3-hydroxytetradecanoyl-[acyl-carrier-protein] and UDP-N-acetyl-alpha-D-glucosamine: step 1/6. In terms of biological role, involved in the biosynthesis of lipid A, a phosphorylated glycolipid that anchors the lipopolysaccharide to the outer membrane of the cell. This chain is Acyl-[acyl-carrier-protein]--UDP-N-acetylglucosamine O-acyltransferase, found in Chlamydia pneumoniae (Chlamydophila pneumoniae).